Here is a 356-residue protein sequence, read N- to C-terminus: UDP-N-acetylglucosamine--N-acetylmuramyl-(pentapeptide) pyrophosphoryl-undecaprenol N-acetylglucosamine transferase (356 aa).

UDP-N-acetyl-alpha-D-glucosamine-binding positions include T15 to G17, N127, R163, S191, I244, A263 to E268, and Q288.

The protein belongs to the glycosyltransferase 28 family. MurG subfamily.

Its subcellular location is the cell inner membrane. The catalysed reaction is di-trans,octa-cis-undecaprenyl diphospho-N-acetyl-alpha-D-muramoyl-L-alanyl-D-glutamyl-meso-2,6-diaminopimeloyl-D-alanyl-D-alanine + UDP-N-acetyl-alpha-D-glucosamine = di-trans,octa-cis-undecaprenyl diphospho-[N-acetyl-alpha-D-glucosaminyl-(1-&gt;4)]-N-acetyl-alpha-D-muramoyl-L-alanyl-D-glutamyl-meso-2,6-diaminopimeloyl-D-alanyl-D-alanine + UDP + H(+). It functions in the pathway cell wall biogenesis; peptidoglycan biosynthesis. Functionally, cell wall formation. Catalyzes the transfer of a GlcNAc subunit on undecaprenyl-pyrophosphoryl-MurNAc-pentapeptide (lipid intermediate I) to form undecaprenyl-pyrophosphoryl-MurNAc-(pentapeptide)GlcNAc (lipid intermediate II). In Yersinia pseudotuberculosis serotype O:1b (strain IP 31758), this protein is UDP-N-acetylglucosamine--N-acetylmuramyl-(pentapeptide) pyrophosphoryl-undecaprenol N-acetylglucosamine transferase.